Reading from the N-terminus, the 206-residue chain is Large ribosomal subunit protein mL40 (206 aa).

The N-terminal 46 residues, 1-46 (MATAAMLCAARALRPRSWIPGTCQAQVRHTHQRASLLSFWELIPMR), are a transit peptide targeting the mitochondrion. The segment at 170-190 (PFEKEGPHYTPPVPNYQAPEG) is disordered.

This sequence belongs to the mitochondrion-specific ribosomal protein mL40 family. Component of the mitochondrial ribosome large subunit (39S) which comprises a 16S rRNA and about 50 distinct proteins.

It is found in the mitochondrion. The protein is Large ribosomal subunit protein mL40 (Mrpl40) of Rattus norvegicus (Rat).